A 97-amino-acid polypeptide reads, in one-letter code: Protein RnfH (97 aa).

This sequence belongs to the UPF0125 (RnfH) family.

The protein is Protein RnfH of Halorhodospira halophila (strain DSM 244 / SL1) (Ectothiorhodospira halophila (strain DSM 244 / SL1)).